The chain runs to 904 residues: MPQLLRNVLCVIETFHKYASEDSNGATLTGRELKQLIQGEFGDFFQPCVLHAVEKNSNLLNIDSNGIISFDEFVLAIFNLLNLCYLDIKSLLSSELRQVTKPEKEKLDDVDVQATTGDGQWTVGTSPTQEKRMLPSGMASSSQLIPEESGAVGNNRVDPWREAKTHNFPGEASEHNDPKNKHLEGDEQSQEVAQDIQTTEDNEGQLKTNKPMAGSKKTSSPTERKGQDKEISQEGDEPAREQSVSKIRDQFGEQEGNLATQSSPPKEATQRPCEDQEVRTEKEKHSNIQEPPLQREDEPSSQHADLPEQAAARSPSQTQKSTDSKDVCRMFDTQEPGKDADQTPAKTKNLGEPEDYGRTSETQEKECETKDLPVQYGSRNGSETSDMRDERKERRGPEAHGTAGQKERDRKTRPLVLETQTQDGKYQELQGLSKSKDAEKGSETQYLSSEGGDQTHPELEGTAVSGEEAEHTKEGTAEAFVNSKNAPAAERTLGARERTQDLAPLEKQSVGENTRVTKTHDQPVEEEDGYQGEDPESPFTQSDEGSSETPNSLASEEGNSSSETGELPVQGDSQSQGDQHGESVQGGHNNNPDTQRQGTPGEKNRALEAVVPAVRGEDVQLTEDQEQPARGEHKNQGPGTKGPGAAVEPNGHPEAQESTAGDENRKSLEIEITGALDEDFTDQLSLMQLPGKGDSRNELKVQGPSSKEEKGRATEAQNTLLESLDEDNSASLKIQLETKEPVTSEEEDESPQELAGEGGDQKSPAKKEHNSSVPWSSLEKQMQRDQEPCSVERGAVYSSPLYQYLQEKILQQTNVTQEEHQKQVQIAQASGPELCSVSLTSEISDCSVFFNYSQASQPYTRGLPLDESPAGAQETPAPQALEDKQGHPQRERLVLQREASTTKQ.

The EF-hand domain occupies 48–83 (CVLHAVEKNSNLLNIDSNGIISFDEFVLAIFNLLNL). 2 disordered regions span residues 102–792 (PEKE…CSVE) and 858–890 (PYTRGLPLDESPAGAQETPAPQALEDKQGHPQR). Positions 113-128 (QATTGDGQWTVGTSPT) are enriched in polar residues. 5 stretches are compositionally biased toward basic and acidic residues: residues 172–185 (ASEHNDPKNKHLEG), 222–240 (TERKGQDKEISQEGDEPAR), 268–300 (ATQRPCEDQEVRTEKEKHSNIQEPPLQREDEPS), 349–371 (NLGEPEDYGRTSETQEKECETKD), and 385–398 (SDMRDERKERRGPE). Polar residues predominate over residues 443 to 452 (ETQYLSSEGG). Over residues 524 to 536 (VEEEDGYQGEDPE) the composition is skewed to acidic residues. The span at 538–554 (PFTQSDEGSSETPNSLA) shows a compositional bias: polar residues. Low complexity predominate over residues 555–578 (SEEGNSSSETGELPVQGDSQSQGD). Over residues 586-598 (GGHNNNPDTQRQG) the composition is skewed to polar residues. Positions 759–770 (GDQKSPAKKEHN) are enriched in basic and acidic residues. The span at 771–780 (SSVPWSSLEK) shows a compositional bias: polar residues. A compositionally biased stretch (basic and acidic residues) spans 881 to 890 (LEDKQGHPQR).

The protein belongs to the S-100 family.

This chain is Trichohyalin-like protein 1 (TCHHL1), found in Homo sapiens (Human).